The following is a 687-amino-acid chain: Polyphosphate kinase (687 aa).

Asn-45 is an ATP binding site. Mg(2+) is bound by residues Arg-375 and Arg-405. The Phosphohistidine intermediate role is filled by His-435. 3 residues coordinate ATP: Tyr-472, Arg-568, and His-596.

It belongs to the polyphosphate kinase 1 (PPK1) family. It depends on Mg(2+) as a cofactor. In terms of processing, an intermediate of this reaction is the autophosphorylated ppk in which a phosphate is covalently linked to a histidine residue through a N-P bond.

It catalyses the reaction [phosphate](n) + ATP = [phosphate](n+1) + ADP. Its function is as follows. Catalyzes the reversible transfer of the terminal phosphate of ATP to form a long-chain polyphosphate (polyP). The chain is Polyphosphate kinase from Paraburkholderia phytofirmans (strain DSM 17436 / LMG 22146 / PsJN) (Burkholderia phytofirmans).